Consider the following 264-residue polypeptide: uncharacterized protein (264 aa).

Residues 7-27 traverse the membrane as a helical segment; it reads LTLGICLVLLIILIVGYVIMT.

It belongs to the staphylococcal tandem lipoprotein family.

The protein resides in the cell membrane. This is an uncharacterized protein from Staphylococcus aureus (strain NCTC 8325 / PS 47).